We begin with the raw amino-acid sequence, 99 residues long: uncharacterized protein (99 aa).

The N-terminal stretch at 1–17 (MMMNSFFPAMALMVLVG) is a signal peptide. C18 carries the N-palmitoyl cysteine lipid modification. Residue C18 is the site of S-diacylglycerol cysteine attachment.

Its subcellular location is the cell membrane. This is an uncharacterized protein from Escherichia coli O157:H7.